Reading from the N-terminus, the 222-residue chain is Pyridoxine/pyridoxamine 5'-phosphate oxidase (222 aa).

Residues Arg16–Tyr19 and Lys75 contribute to the substrate site. FMN contacts are provided by residues Arg70 to Lys75, Phe85 to Thr86, Lys92, and Gln114. Positions 132, 136, and 140 each coordinate substrate. FMN-binding positions include Gln149–Ser150 and Trp195. Arg201 to His203 contacts substrate. Arg205 contributes to the FMN binding site.

The protein belongs to the pyridoxamine 5'-phosphate oxidase family. In terms of assembly, homodimer. The cofactor is FMN.

The enzyme catalyses pyridoxamine 5'-phosphate + O2 + H2O = pyridoxal 5'-phosphate + H2O2 + NH4(+). The catalysed reaction is pyridoxine 5'-phosphate + O2 = pyridoxal 5'-phosphate + H2O2. The protein operates within cofactor metabolism; pyridoxal 5'-phosphate salvage; pyridoxal 5'-phosphate from pyridoxamine 5'-phosphate: step 1/1. Its pathway is cofactor metabolism; pyridoxal 5'-phosphate salvage; pyridoxal 5'-phosphate from pyridoxine 5'-phosphate: step 1/1. Its function is as follows. Catalyzes the oxidation of either pyridoxine 5'-phosphate (PNP) or pyridoxamine 5'-phosphate (PMP) into pyridoxal 5'-phosphate (PLP). The chain is Pyridoxine/pyridoxamine 5'-phosphate oxidase from Saccharopolyspora erythraea (strain ATCC 11635 / DSM 40517 / JCM 4748 / NBRC 13426 / NCIMB 8594 / NRRL 2338).